The chain runs to 140 residues: Protein E6 (140 aa).

2 zinc fingers span residues Cys-28–Cys-64 and Cys-101–Cys-137.

This sequence belongs to the papillomaviridae E6 protein family. In terms of assembly, forms homodimers. Interacts with ubiquitin-protein ligase UBE3A/E6-AP; this interaction stimulates UBE3A ubiquitin activity. Interacts with host BAK1.

The protein localises to the host cytoplasm. The protein resides in the host nucleus. In terms of biological role, plays a major role in the induction and maintenance of cellular transformation. E6 associates with host UBE3A/E6-AP ubiquitin-protein ligase and modulates its activity. Protects host keratinocytes from apoptosis by mediating the degradation of host BAK1. May also inhibit host immune response. In Human papillomavirus 24, this protein is Protein E6.